The chain runs to 205 residues: Octanoyltransferase (205 aa).

Positions 30–205 (NSSDELVWLL…ILKKEFYKIF (176 aa)) constitute a BPL/LPL catalytic domain. Substrate-binding positions include 68–75 (RGGKYTYH), 140–142 (AFG), and 153–155 (GIA). The Acyl-thioester intermediate role is filled by Cys-171.

It belongs to the LipB family.

The protein localises to the cytoplasm. The enzyme catalyses octanoyl-[ACP] + L-lysyl-[protein] = N(6)-octanoyl-L-lysyl-[protein] + holo-[ACP] + H(+). It functions in the pathway protein modification; protein lipoylation via endogenous pathway; protein N(6)-(lipoyl)lysine from octanoyl-[acyl-carrier-protein]: step 1/2. Its function is as follows. Catalyzes the transfer of endogenously produced octanoic acid from octanoyl-acyl-carrier-protein onto the lipoyl domains of lipoate-dependent enzymes. Lipoyl-ACP can also act as a substrate although octanoyl-ACP is likely to be the physiological substrate. This Wolbachia sp. subsp. Brugia malayi (strain TRS) protein is Octanoyltransferase.